Consider the following 160-residue polypeptide: Cytochrome b6-f complex subunit 4 (160 aa).

The next 3 membrane-spanning stretches (helical) occupy residues 36-56, 95-115, and 131-151; these read LLYI…GLAV, LLGV…PFLE, and TVFL…TLPI.

Belongs to the cytochrome b family. PetD subfamily. As to quaternary structure, the 4 large subunits of the cytochrome b6-f complex are cytochrome b6, subunit IV (17 kDa polypeptide, petD), cytochrome f and the Rieske protein, while the 4 small subunits are petG, petL, petM and petN. The complex functions as a dimer.

It is found in the plastid. The protein localises to the chloroplast thylakoid membrane. In terms of biological role, component of the cytochrome b6-f complex, which mediates electron transfer between photosystem II (PSII) and photosystem I (PSI), cyclic electron flow around PSI, and state transitions. This Spinacia oleracea (Spinach) protein is Cytochrome b6-f complex subunit 4.